The sequence spans 249 residues: dTDP-4-amino-2,3,4,6-tetradeoxy-D-glucose N,N-dimethyltransferase (249 aa).

Arg-30 contributes to the substrate binding site. S-adenosyl-L-methionine is bound by residues Ala-59, Glu-80, and 102 to 103 (DI). Residues Thr-165, 178-182 (RLSHS), and Arg-241 contribute to the substrate site.

Belongs to the methyltransferase TylM1/DesVI family. As to quaternary structure, homodimer. Mg(2+) serves as cofactor.

It catalyses the reaction dTDP-4-amino-2,3,4,6-tetradeoxy-alpha-D-erythro-hexopyranose + 2 S-adenosyl-L-methionine = dTDP-alpha-D-forosamine + 2 S-adenosyl-L-homocysteine + 2 H(+). In terms of biological role, involved in the biosynthesis of forosamine ((4-dimethylamino)-2,3,4,6-tetradeoxy-alpha-D-threo-hexopyranose), a highly deoxygenated sugar component of several bioactive natural products such as the insecticidal spinosyns A and D. Catalyzes the dimethylation of the C-4 amino group from dTDP-4-amino-2,3,4,6-tetradeoxy-alpha-D-glucose to yield dTDP-D-forosamine. The chain is dTDP-4-amino-2,3,4,6-tetradeoxy-D-glucose N,N-dimethyltransferase from Saccharopolyspora spinosa.